The sequence spans 188 residues: Type II secretion system protein H (188 aa).

Residues 1-10 constitute a propeptide, leader sequence; it reads MKRSTRKQQG. Phe11 bears the N-methylphenylalanine mark. The chain crosses the membrane as a helical span at residues 13-35; that stretch reads LLEMMLVVLLAGIAAGMVVMAFP.

Belongs to the GSP H family. As to quaternary structure, type II secretion is composed of four main components: the outer membrane complex, the inner membrane complex, the cytoplasmic secretion ATPase and the periplasm-spanning pseudopilus. Interacts with core component OutG. Cleaved by prepilin peptidase. In terms of processing, methylated by prepilin peptidase at the amino group of the N-terminal phenylalanine once the leader sequence is cleaved by prepilin peptidase.

The protein localises to the cell inner membrane. Component of the type II secretion system required for the energy-dependent secretion of extracellular factors such as proteases and toxins from the periplasm. Part of the pseudopilus tip complex that is critical for the recognition and binding of secretion substrates. This Pectobacterium carotovorum subsp. carotovorum (Erwinia carotovora subsp. carotovora) protein is Type II secretion system protein H (outH).